We begin with the raw amino-acid sequence, 958 residues long: Glucoamylase 1 (958 aa).

Positions 1–22 are cleaved as a signal peptide; sequence MIFLKLIKSIVIGLGLVSAIQA. Residues Asn-61, Asn-78, Asn-107, Asn-197, Asn-403, and Asn-416 are each glycosylated (N-linked (GlcNAc...) asparagine). Active-site residues include Asp-470 and Glu-473. N-linked (GlcNAc...) asparagine glycosylation is found at Asn-513, Asn-580, and Asn-602. Residue Asp-638 is the Proton donor of the active site. Residues Asn-813 and Asn-907 are each glycosylated (N-linked (GlcNAc...) asparagine).

Belongs to the glycosyl hydrolase 31 family.

It catalyses the reaction Hydrolysis of terminal (1-&gt;4)-linked alpha-D-glucose residues successively from non-reducing ends of the chains with release of beta-D-glucose.. Its function is as follows. This glucoamylase has a specificity toward both alpha-1,4 and alpha-1,6 linkages. The sequence is that of Glucoamylase 1 (GAM1) from Schwanniomyces occidentalis (Yeast).